Reading from the N-terminus, the 480-residue chain is tRNA (guanine(37)-N(1))-methyltransferase (480 aa).

A mitochondrion-targeting transit peptide spans 1–18 (MAAVWRRSARLFILLQRH). Residues histidine 273, 311-312 (DL), 339-340 (DG), and asparagine 367 contribute to the S-adenosyl-L-methionine site. The segment at 458–480 (HTQDRDTSEEPCPKKQKCEDSTN) is disordered.

The protein belongs to the class I-like SAM-binding methyltransferase superfamily. TRM5/TYW2 family. In terms of assembly, monomer.

It is found in the mitochondrion matrix. It localises to the nucleus. The protein resides in the cytoplasm. The enzyme catalyses guanosine(37) in tRNA + S-adenosyl-L-methionine = N(1)-methylguanosine(37) in tRNA + S-adenosyl-L-homocysteine + H(+). Its function is as follows. Involved in mitochondrial tRNA methylation. Specifically methylates the N1 position of guanosine-37 in various tRNAs. Methylation is not dependent on the nature of the nucleoside 5' of the target nucleoside. This is the first step in the biosynthesis of wybutosine (yW), a modified base adjacent to the anticodon of tRNAs and required for accurate decoding. This chain is tRNA (guanine(37)-N(1))-methyltransferase (trmt5), found in Danio rerio (Zebrafish).